A 100-amino-acid chain; its full sequence is MTEVGWWKLTFLRKKKSTPKVLYEIPDTYAQTEGGAEPPGPDAGDPHSDFNSRLEKIVDKNTKGKHVKVSNSGRFKEKKKVRAMLAENPNLFDDRENKGQ.

The disordered stretch occupies residues 29-51 (YAQTEGGAEPPGPDAGDPHSDFN).

This sequence belongs to the PRR15 family.

The chain is Proline-rich protein 15-like protein (Prr15l) from Mus musculus (Mouse).